The chain runs to 467 residues: Ammonium transporter Rh type C (467 aa).

Residues 1-9 (MAWNTNLRW) are Cytoplasmic-facing. Residues 10-30 (RLPLLCLVLEVAMVVLFGLFV) traverse the membrane as a helical segment. Topologically, residues 31-61 (RYSPDADSSWSNEKRKGNITSDLENEFYYRY) are extracellular. Residue N48 is glycosylated (N-linked (GlcNAc...) asparagine). A helical membrane pass occupies residues 62–82 (PSFQDVHVMVFLGFGFLMTFL). The Cytoplasmic segment spans residues 83 to 86 (QRYG). Residues 87–107 (YCALGFNFLLAALGVQWALLM) form a helical membrane-spanning segment. The Extracellular segment spans residues 108 to 131 (QGWFQYTKDRLILLGIKNLIDADS). 2 consecutive transmembrane segments (helical) span residues 132 to 152 (CVAS…PVQM) and 153 to 173 (LLMT…LLHV). Residues 174-179 (LEVKDA) lie on the Extracellular side of the membrane. The helical transmembrane segment at 180–200 (GGSITIHIFGAYFGLTVTWIL) threads the bilayer. Residues 201–219 (YRHNLDHSRERQSSVYHSN) lie on the Cytoplasmic side of the membrane. The helical transmembrane segment at 220–240 (LFAMIGTLFLWIYWPSFNSAM) threads the bilayer. At 241 to 251 (SNYGDAQHRAA) the chain is on the extracellular side. A helical membrane pass occupies residues 252–272 (INTYCSLAASVLTSVAMSSVL). Residues 273-282 (HKKGKLDMVH) lie on the Cytoplasmic side of the membrane. A helical membrane pass occupies residues 283–303 (IQNATLAGGVGVGTAAEMMLM). Residue P304 is a topological domain, extracellular. The helical transmembrane segment at 305–325 (YGALIVGFICGAVSTLGFVYL) threads the bilayer. The Cytoplasmic portion of the chain corresponds to 326-343 (TPFLESRLRIQDTCGIHN). The chain crosses the membrane as a helical span at residues 344-364 (LHGIPGLIGAIVGAVTAAYAS). Topologically, residues 365–391 (PDGDRGFVYPFGFHNEKDEKVQGRFQA) are extracellular. The chain crosses the membrane as a helical span at residues 392-412 (FGLLLTLAIAMVGGTIMGLIL). The Cytoplasmic segment spans residues 413-467 (KLPFWGQAMDEDCFDDSIYWEMHEEKSSSPEDHTHKPSVPTEPVEQPTSSATLAP). A compositionally biased stretch (basic and acidic residues) spans 436-447 (EEKSSSPEDHTH). The segment at 436–467 (EEKSSSPEDHTHKPSVPTEPVEQPTSSATLAP) is disordered. Positions 458 to 467 (QPTSSATLAP) are enriched in polar residues.

Belongs to the ammonium transporter (TC 2.A.49) family. Rh subfamily. As to quaternary structure, homotrimer. In terms of processing, N-glycosylated.

It is found in the cell membrane. The protein resides in the apical cell membrane. The enzyme catalyses NH4(+)(in) = NH4(+)(out). It carries out the reaction methylamine(out) = methylamine(in). It catalyses the reaction CO2(out) = CO2(in). Ammonium transporter involved in the maintenance of acid-base homeostasis. Transports ammonium and its related derivative methylammonium across the plasma membrane of epithelial cells likely contributing to renal transepithelial ammonia transport and ammonia metabolism. Postulated to primarily mediate an electroneutral bidirectional transport of NH3 ammonia species according to a mechanism that implies interaction of an NH4(+) ion with acidic residues of the pore entry followed by dissociation of NH4(+) into NH3 and H(+). As a result NH3 transits through the central pore and is protonated on the extracellular side reforming NH4(+). May act as a CO2 channel providing for renal acid secretion. The sequence is that of Ammonium transporter Rh type C (RHCG) from Oryctolagus cuniculus (Rabbit).